The sequence spans 774 residues: E3 ubiquitin-protein ligase RFWD3 (774 aa).

Disordered regions lie at residues 32 to 126 and 203 to 281; these read GTIE…TAGA and PYPL…SAME. S59 and S75 each carry phosphoserine; by ATM and ATR. A compositionally biased stretch (acidic residues) spans 92-103; it reads LTEEVQPSEENM. The span at 108–121 shows a compositional bias: polar residues; the sequence is PGTSEEPSQGSGAN. Acidic residues predominate over residues 223 to 242; the sequence is SDSDGSAEDEEVVVQAEEPE. An RING-type; degenerate zinc finger spans residues 288–332; it reads CTICLEQWTNAGDHRISALRCGHLFGFRCISKWLKGQTRKCPQCN. The stretch at 358–403 forms a coiled coil; that stretch reads RMKSDLLNEQMLRKQAELESAQCRLQLQVLIDKCTKLNSRVQDLEK. WD repeat units follow at residues 493 to 535, 536 to 568, and 583 to 628; these read IPMH…VVQT, YNTG…LIYD, and KARC…SHKP.

Interacts with MDM2 and p53/TP53. Binds to the RPA complex via direct interaction with RPA2. Interacts with RAD51. In terms of processing, phosphorylated at Ser-59 and Ser-75 upon DNA damage by ATM or ATR. ATM phosphorylation occurs at early times upon DNA damage, while ATR is the major kinase at later times. Phosphorylation by ATM and ATR is required to stabilize p53/TP53. Part of the phosphorylation depends upon RPA2 presence.

The protein resides in the nucleus. The protein localises to the PML body. It is found in the cytoplasm. The enzyme catalyses S-ubiquitinyl-[E2 ubiquitin-conjugating enzyme]-L-cysteine + [acceptor protein]-L-lysine = [E2 ubiquitin-conjugating enzyme]-L-cysteine + N(6)-ubiquitinyl-[acceptor protein]-L-lysine.. The protein operates within protein modification; protein ubiquitination. Its function is as follows. E3 ubiquitin-protein ligase required for the repair of DNA interstrand cross-links (ICL) in response to DNA damage. Plays a key role in RPA-mediated DNA damage signaling and repair. Acts by mediating ubiquitination of the RPA complex (RPA1, RPA2 and RPA3 subunits) and RAD51 at stalled replication forks, leading to remove them from DNA damage sites and promote homologous recombination. Also mediates the ubiquitination of p53/TP53 in the late response to DNA damage, and acts as a positive regulator of p53/TP53 stability, thereby regulating the G1/S DNA damage checkpoint. May act by catalyzing the formation of short polyubiquitin chains on p53/TP53 that are not targeted to the proteasome. In response to ionizing radiation, interacts with MDM2 and enhances p53/TP53 ubiquitination, possibly by restricting MDM2 from extending polyubiquitin chains on ubiquitinated p53/TP53. Required to translesion DNA synthesis across DNA-protein cross-link adducts by catalyzing ubiquitination of proteins on single-stranded DNA (ssDNA). The chain is E3 ubiquitin-protein ligase RFWD3 (Rfwd3) from Mus musculus (Mouse).